We begin with the raw amino-acid sequence, 490 residues long: ATP synthase subunit beta, plastid (490 aa).

170–177 lines the ATP pocket; sequence GGAGVGKT.

This sequence belongs to the ATPase alpha/beta chains family. In terms of assembly, F-type ATPases have 2 components, CF(1) - the catalytic core - and CF(0) - the membrane proton channel. CF(1) has five subunits: alpha(3), beta(3), gamma(1), delta(1), epsilon(1). CF(0) has four main subunits: a(1), b(1), b'(1) and c(9-12).

The protein localises to the plastid thylakoid membrane. It catalyses the reaction ATP + H2O + 4 H(+)(in) = ADP + phosphate + 5 H(+)(out). Its function is as follows. Produces ATP from ADP in the presence of a proton gradient across the membrane. The catalytic sites are hosted primarily by the beta subunits. In Cuscuta reflexa (Southern Asian dodder), this protein is ATP synthase subunit beta, plastid.